Here is a 613-residue protein sequence, read N- to C-terminus: Secretogranin-2 (613 aa).

The N-terminal stretch at 1-27 (MAEAKTHWLGAVLSLIPLIFLLSEAEA) is a signal peptide. Positions 28 to 30 (ASF) are excised as a propeptide. Disordered regions lie at residues 67 to 105 (QQAH…DSLS) and 119 to 146 (QAEN…PMDM). Over residues 92–105 (ENGDLPESSRDSLS) the composition is skewed to basic and acidic residues. Sulfotyrosine is present on Y150. 6 positions are modified to phosphoserine: S173, S267, S428, S528, S551, and S552. The span at 257–283 (ESQTQEEVRDSKENADKTEQINDEMKR) shows a compositional bias: basic and acidic residues. The segment at 257–287 (ESQTQEEVRDSKENADKTEQINDEMKRSGQL) is disordered. A compositionally biased stretch (basic and acidic residues) spans 546-557 (HLSQHSSQETDK). The tract at residues 546–580 (HLSQHSSQETDKLASVSKRLPVGTPKSDDTPNRPY) is disordered.

The protein belongs to the chromogranin/secretogranin protein family. In terms of assembly, interacts with Secretogranin III/SCG3. In terms of tissue distribution, highest levels detected in anterior pituitary followed by adrenal medulla and posterior pituitary (at protein level). In the brain, high levels are found in the hypothalamus, comparable to those present in posterior pituitary with two- to six-fold lower levels present in the other brain regions investigated including caudate nucleus, hippocampus, thalamus and brainstem (at protein level).

It localises to the secreted. Its function is as follows. Neuroendocrine protein of the granin family that regulates the biogenesis of secretory granules. The chain is Secretogranin-2 (SCG2) from Bos taurus (Bovine).